The sequence spans 110 residues: HIT-like protein CPn_0488/CP_0266/CPj0488/CpB0508 (110 aa).

Residues 3–110 form the HIT domain; that stretch reads VFKQIIDGLI…LGGRPLGAIA (108 aa). The Histidine triad motif motif lies at 95–99; sequence HLHIH.

The protein is HIT-like protein CPn_0488/CP_0266/CPj0488/CpB0508 of Chlamydia pneumoniae (Chlamydophila pneumoniae).